The primary structure comprises 82 residues: Delta-conotoxin-like CnVIA (82 aa).

The N-terminal stretch at Met1 to Ala22 is a signal peptide. Positions Asp23–Asn49 are excised as a propeptide. 3 disulfide bridges follow: Cys54–Cys69, Cys61–Cys73, and Cys68–Cys78.

Belongs to the conotoxin O1 superfamily. In terms of tissue distribution, expressed by the venom duct.

It localises to the secreted. Functionally, delta-conotoxins bind to site 6 of voltage-gated sodium channels (Nav) and inhibit the inactivation process. In Conus consors (Singed cone), this protein is Delta-conotoxin-like CnVIA.